A 97-amino-acid polypeptide reads, in one-letter code: Coiled-coil domain-containing protein 167 (97 aa).

The stretch at 10 to 79 forms a coiled coil; sequence GVALEIDGLE…LRQENRKNML (70 aa). The helical transmembrane segment at 78 to 95 threads the bilayer; it reads MLLSVAIFILLTLVYAYW.

It is found in the membrane. In Homo sapiens (Human), this protein is Coiled-coil domain-containing protein 167 (CCDC167).